The following is a 190-amino-acid chain: Elongation factor P-like protein (190 aa).

The protein belongs to the elongation factor P family.

The protein is Elongation factor P-like protein of Proteus mirabilis (strain HI4320).